Consider the following 493-residue polypeptide: Na(+)/H(+) antiporter subunit D (493 aa).

Transmembrane regions (helical) follow at residues 3 to 23 (NFVI…IFMT), 31 to 51 (IFST…VQTV), 77 to 97 (FASL…LYSF), 107 to 127 (SFYY…FLTG), 129 to 149 (LFNM…LIVL), 163 to 183 (IVFN…LYAV), 203 to 223 (GLIT…GGIF), 227 to 247 (FWLP…FGAL), 251 to 271 (VGLY…TAFT), 274 to 294 (LMIW…LAYS), 299 to 319 (IVIY…AVHT), 330 to 350 (LIHD…LIAL), 370 to 390 (GWMF…SGFV), 407 to 427 (ISML…RIFI), and 449 to 469 (LYPA…TEWV).

Belongs to the CPA3 antiporters (TC 2.A.63) subunit D family. As to quaternary structure, forms a heterooligomeric complex that consists of seven subunits: MrpA, MrpB, MrpC, MrpD, MrpE, MrpF and MrpG.

Its subcellular location is the cell membrane. Mrp complex is a Na(+)/H(+) antiporter that is considered to be the major Na(+) excretion system in B.subtilis. Has a major role in Na(+) resistance and a minor role in Na(+)- and K(+)-dependent pH homeostasis as compared to TetB. MrpA may be the actual Na(+)/H(+) antiporter, although the six other Mrp proteins are all required for Na(+)/H(+) antiport activity and Na(+) resistance. MrpA is required for initiation of sporulation when external Na(+) concentration increases. Also transports Li(+) but not K(+), Ca(2+) or Mg(2+). The chain is Na(+)/H(+) antiporter subunit D (mrpD) from Bacillus subtilis (strain 168).